A 395-amino-acid polypeptide reads, in one-letter code: Flap endonuclease 1 (395 aa).

Residues 1–108 (MGILGLSKLL…DELETRRQKA (108 aa)) form an N-domain region. Aspartate 34 contributes to the Mg(2+) binding site. Arginine 74 contributes to the DNA binding site. Positions 90, 162, 164, 183, and 185 each coordinate Mg(2+). The tract at residues 126–257 (MMEKMSKRTV…QRAWEGIQRY (132 aa)) is I-domain. Glutamate 162 provides a ligand contact to DNA. The DNA site is built by glycine 235 and aspartate 237. Aspartate 237 serves as a coordination point for Mg(2+). The tract at residues 340-348 (TQGRLDNFF) is interaction with PCNA.

This sequence belongs to the XPG/RAD2 endonuclease family. FEN1 subfamily. Interacts with PCNA. Three molecules of FEN1 bind to one PCNA trimer with each molecule binding to one PCNA monomer. PCNA stimulates the nuclease activity without altering cleavage specificity. Requires Mg(2+) as cofactor. Post-translationally, phosphorylated. Phosphorylation upon DNA damage induces relocalization to the nuclear plasma.

It is found in the nucleus. The protein resides in the nucleolus. It localises to the nucleoplasm. Its subcellular location is the mitochondrion. Structure-specific nuclease with 5'-flap endonuclease and 5'-3' exonuclease activities involved in DNA replication and repair. During DNA replication, cleaves the 5'-overhanging flap structure that is generated by displacement synthesis when DNA polymerase encounters the 5'-end of a downstream Okazaki fragment. It enters the flap from the 5'-end and then tracks to cleave the flap base, leaving a nick for ligation. Also involved in the long patch base excision repair (LP-BER) pathway, by cleaving within the apurinic/apyrimidinic (AP) site-terminated flap. Acts as a genome stabilization factor that prevents flaps from equilibrating into structures that lead to duplications and deletions. Also possesses 5'-3' exonuclease activity on nicked or gapped double-stranded DNA, and exhibits RNase H activity. Also involved in replication and repair of rDNA and in repairing mitochondrial DNA. The chain is Flap endonuclease 1 from Leishmania braziliensis.